The following is a 1984-amino-acid chain: MAMLPPPGPQSFVRFTKQSLALIEQRIAEGKTKEPKEEKKDDHDEGPKPSSDLEAGKQLPFIYGDIPAGMVSEPLEDLDPYYADKKTFIVLNKGKAIFRFNATPALYILSPFSPLRRISIKILVHSLFSMLIMCTILTNCIFMTMNNPAEWTKNVEYTFTGIYTFESLVKIFARGFCVGEFTFLRDPWNWLDFIVIVFAYLTEFVNLGNVSALRTFRVLRALKTISVIPGLKTIVGALIQSVKKLSDVIILTVFCLSVFALIGLQLFMGHLKHKCLRKIENETLESIMSSIESEEDYKKYFYYLEGSKDALLCGFSTDSGQCPEGYYCVKAGRNPDYGYTSFDTFSWAFLALFRLMTQDYWENLYQQTLRAAGKTYMIFFVVVIFLGSFYLINLILAVVAMAYEEQNQANIEEAKQKELEFQQMLDRLKKEQEEAEAIAAAAAEYTSIGRSRIMGLSESSSETSKLSSKSAKERRNRRKKKNQKKLSSGEEKGDDEKLSKSESEESISRKQFHLGVEGHRLAREKRLSAPNQSPLSIRGSLFSARRSSRTSLFSFKGRGKDIGSETEFADDEHSIFGDNESRRGSLFVPQRPQERRSSNLSQASRSPPMLQMNGKMHSAVDCNGVVSLVDGPSALMLPNGQLLPEVIIDKATSDDSGTTQIRKKRRSSSYLLSEDMLNDPHLRQRAMSRASILTNTVEELEESRQKCPSWWYRFAHTFLIWNCSPFWIKFKKFIYIIVMDPFVDLAITICIVLNTLFMAMEHHPMTEEFKNVLVVGNLVFTGIFAAEMVLKLIAMDPYEYFQVGWNVFDSLIVTLSLVELFLADVEGLSVLRSFRLLRVFKLAKSWPTLNMLIKIIGNSVGPLGNLTLVLAIIVFIFAVVGMQLFGKSYKECVCKINDDCSLPRWHMNDFFHSFLIVFRVLCGEWIETMWDCMEVAGQAMCLIVYMMVMVIGNLVVLNLFLALLLSSFSSDNLSAIEEDTDANNLQIAVTRIKKGINYVKQTLRELILKAFSKKPKISKEIRQAEDLNSKKENYISNRTLAEMSKDYNFHKEKDKISGFGSSMDKYLMEESDHQSFIHNPSLTVTVPIAPGESDLENMNTEELSSDSESEYSKERLNRSSSSECSTVDNALPGEGEEAEAEPVNSDEPEACFTDGCVRRFPCCQVSIESGKGKIWWNIRKTCYRIVEHSWFESFIVLMILLSSGALAFEDIYIEKKKTIKIILEYADKIFTYIFILEMLLKWVAYGYKTYFTNAWCWLDFLIVDVSLVTLVANTLGYSDLGPIKSLRTLRALRPLRALSRFEGMRVVVNALIGAIPSIMNVLLVCLIFWLIFSIMGVNLFAGKFYQCVNTTDDSRFPTKQVSNRSECFALMNGSQNVRWKNLKVNFDNVGLRYLSLLQVATFKGWMDIMYAAVDSVNVDQQPSYEHNLYMYIYFVIFIIFGSFFTLNLFIGVIIDNFNQQKKKLGGQDIFMTEEQKKYYNAMKKLGSKKPQKPIPRPGNKFQGCIFDLVTNQAFDITIMILICLNMVTMMVEKEGQSDYMTDVLYWINVVFIILFTGECVLKLISLRHYYFTIGWNIFDFVVVILSIVGMFLAELIETYFVSPTLFRVIRLARIGRILRLIKGAKGIRTLLFALMMSLPALFNIGLLLFLVMFIYAIFGMSNFAYVKKEAGINDMFNFETFGNSMICLFQITTSAGWDGLLAPILNSAPPDCDPKKVHPGSSTEGDCGSPSVGIFYFVSYIIISFLVVVNMYIAVILENFSVATEESTEPLSEDDFEMFYEVWEKFDPDATQFIEYSKLSDFAAALDPPLLIAKPNKVQLIAMDLPMVSGDRIHCLDILFAFTKRVLGESGEMDSLRSQMEERFMSANPSKVSYEPITTTLKRKQEDVSATVIQRAYRRYRLRQNVKNISSIYIKEGDKDDDLPNKGDIVFDNVNSSSPEKTDATASTISPPSYDSVTKPDKEKYEKDKTEKEDKGKDGKETKK.

The Cytoplasmic portion of the chain corresponds to 1-125 (MAMLPPPGPQ…RRISIKILVH (125 aa)). The span at 26–47 (RIAEGKTKEPKEEKKDDHDEGP) shows a compositional bias: basic and acidic residues. Residues 26–55 (RIAEGKTKEPKEEKKDDHDEGPKPSSDLEA) are disordered. The I repeat unit spans residues 112–408 (FSPLRRISIK…VAMAYEEQNQ (297 aa)). The chain crosses the membrane as a helical span at residues 126–145 (SLFSMLIMCTILTNCIFMTM). Residues 146-150 (NNPAE) are Extracellular-facing. The helical transmembrane segment at 151-172 (WTKNVEYTFTGIYTFESLVKIF) threads the bilayer. The Cytoplasmic portion of the chain corresponds to 173-185 (ARGFCVGEFTFLR). The chain crosses the membrane as a helical span at residues 186 to 204 (DPWNWLDFIVIVFAYLTEF). Topologically, residues 205-210 (VNLGNV) are extracellular. Asparagine 209 carries N-linked (GlcNAc...) asparagine glycosylation. The chain crosses the membrane as a helical span at residues 211–227 (SALRTFRVLRALKTISV). Residues 228–241 (IPGLKTIVGALIQS) lie on the Cytoplasmic side of the membrane. A helical transmembrane segment spans residues 242–267 (VKKLSDVIILTVFCLSVFALIGLQLF). At 268-344 (MGHLKHKCLR…PDYGYTSFDT (77 aa)) the chain is on the extracellular side. Cysteines 275 and 322 form a disulfide. Asparagine 281 carries an N-linked (GlcNAc...) asparagine glycan. An intramembrane region (pore-forming) is located at residues 345-361 (FSWAFLALFRLMTQDYW). Residues 362–374 (ENLYQQTLRAAGK) are Extracellular-facing. A helical membrane pass occupies residues 375–400 (TYMIFFVVVIFLGSFYLINLILAVVA). At 401-742 (MAYEEQNQAN…FIYIIVMDPF (342 aa)) the chain is on the cytoplasmic side. Residues 459–469 (SSSETSKLSSK) are compositionally biased toward low complexity. 2 disordered regions span residues 459 to 517 (SSSE…LGVE) and 563 to 610 (GSET…PPML). Basic residues predominate over residues 472 to 484 (KERRNRRKKKNQK). Basic and acidic residues-rich tracts occupy residues 487 to 508 (SSGEEKGDDEKLSKSESEESIS) and 571 to 583 (DEHSIFGDNESRR). The stretch at 723 to 986 (CSPFWIKFKK…EEDTDANNLQ (264 aa)) is one II repeat. The chain crosses the membrane as a helical span at residues 743 to 759 (VDLAITICIVLNTLFMA). The Extracellular segment spans residues 760-768 (MEHHPMTEE). A helical membrane pass occupies residues 769 to 793 (FKNVLVVGNLVFTGIFAAEMVLKLI). The Cytoplasmic portion of the chain corresponds to 794–802 (AMDPYEYFQ). Residues 803–819 (VGWNVFDSLIVTLSLVE) form a helical membrane-spanning segment. Topologically, residues 820 to 828 (LFLADVEGL) are extracellular. The helical transmembrane segment at 829–845 (SVLRSFRLLRVFKLAKS) threads the bilayer. The Cytoplasmic segment spans residues 846-862 (WPTLNMLIKIIGNSVGP). A helical transmembrane segment spans residues 863–885 (LGNLTLVLAIIVFIFAVVGMQLF). Over 886–912 (GKSYKECVCKINDDCSLPRWHMNDFFH) the chain is Extracellular. Cysteine 894 and cysteine 900 are joined by a disulfide. Residues 913-925 (SFLIVFRVLCGEW) constitute an intramembrane region (pore-forming). Over 926-937 (IETMWDCMEVAG) the chain is Extracellular. Cysteines 932 and 941 form a disulfide. The chain crosses the membrane as a helical span at residues 938-964 (QAMCLIVYMMVMVIGNLVVLNLFLALL). Topologically, residues 965 to 1184 (LSSFSSDNLS…WWNIRKTCYR (220 aa)) are cytoplasmic. A disordered region spans residues 1087 to 1146 (PIAPGESDLENMNTEELSSDSESEYSKERLNRSSSSECSTVDNALPGEGEEAEAEPVNSD). Polar residues predominate over residues 1118 to 1128 (RSSSSECSTVD). The segment covering 1134-1146 (EGEEAEAEPVNSD) has biased composition (acidic residues). An III repeat occupies 1177–1485 (NIRKTCYRIV…KKYYNAMKKL (309 aa)). Residues 1185-1209 (IVEHSWFESFIVLMILLSSGALAFE) traverse the membrane as a helical segment. Over 1210 to 1221 (DIYIEKKKTIKI) the chain is Extracellular. A helical transmembrane segment spans residues 1222–1247 (ILEYADKIFTYIFILEMLLKWVAYGY). Residues 1248 to 1249 (KT) are Cytoplasmic-facing. The helical transmembrane segment at 1250–1275 (YFTNAWCWLDFLIVDVSLVTLVANTL) threads the bilayer. At 1276 to 1284 (GYSDLGPIK) the chain is on the extracellular side. Residues 1285–1301 (SLRTLRALRPLRALSRF) form a helical membrane-spanning segment. Residues 1302 to 1314 (EGMRVVVNALIGA) lie on the Cytoplasmic side of the membrane. The chain crosses the membrane as a helical span at residues 1315–1339 (IPSIMNVLLVCLIFWLIFSIMGVNL). Residues 1340-1391 (FAGKFYQCVNTTDDSRFPTKQVSNRSECFALMNGSQNVRWKNLKVNFDNVGL) lie on the Extracellular side of the membrane. A disulfide bridge connects residues cysteine 1347 and cysteine 1367. N-linked (GlcNAc...) asparagine glycosylation is found at asparagine 1349, asparagine 1363, and asparagine 1372. The segment at residues 1392–1402 (RYLSLLQVATF) is an intramembrane region (pore-forming). Over 1403-1428 (KGWMDIMYAAVDSVNVDQQPSYEHNL) the chain is Extracellular. A helical membrane pass occupies residues 1429–1454 (YMYIYFVIFIIFGSFFTLNLFIGVII). Topologically, residues 1455 to 1511 (DNFNQQKKKLGGQDIFMTEEQKKYYNAMKKLGSKKPQKPIPRPGNKFQGCIFDLVTN) are cytoplasmic. Position 1487 is a phosphoserine; by PKC (serine 1487). Residues 1494–1792 (IPRPGNKFQG…WEKFDPDATQ (299 aa)) form an IV repeat. Residues 1512-1531 (QAFDITIMILICLNMVTMMV) form a helical membrane-spanning segment. At 1532–1542 (EKEGQSDYMTD) the chain is on the extracellular side. Residues 1543 to 1564 (VLYWINVVFIILFTGECVLKLI) traverse the membrane as a helical segment. At 1565–1573 (SLRHYYFTI) the chain is on the cytoplasmic side. A helical transmembrane segment spans residues 1574-1595 (GWNIFDFVVVILSIVGMFLAEL). At 1596–1604 (IETYFVSPT) the chain is on the extracellular side. The chain crosses the membrane as a helical span at residues 1605–1624 (LFRVIRLARIGRILRLIKGA). Residues 1625–1637 (KGIRTLLFALMMS) are Cytoplasmic-facing. A helical transmembrane segment spans residues 1638–1660 (LPALFNIGLLLFLVMFIYAIFGM). The Extracellular portion of the chain corresponds to 1661–1683 (SNFAYVKKEAGINDMFNFETFGN). An intramembrane region (pore-forming) is located at residues 1684-1696 (SMICLFQITTSAG). Topologically, residues 1697 to 1730 (WDGLLAPILNSAPPDCDPKKVHPGSSTEGDCGSP) are extracellular. Cysteine 1712 and cysteine 1727 form a disulfide bridge. The chain crosses the membrane as a helical span at residues 1731-1756 (SVGIFYFVSYIIISFLVVVNMYIAVI). The Cytoplasmic segment spans residues 1757 to 1984 (LENFSVATEE…KGKDGKETKK (228 aa)). The IQ domain occupies 1886 to 1915 (EDVSATVIQRAYRRYRLRQNVKNISSIYIK). Residues 1924–1984 (PNKGDIVFDN…KGKDGKETKK (61 aa)) form a disordered region. Positions 1933-1956 (NVNSSSPEKTDATASTISPPSYDS) are enriched in polar residues. A compositionally biased stretch (basic and acidic residues) spans 1958 to 1984 (TKPDKEKYEKDKTEKEDKGKDGKETKK).

It belongs to the sodium channel (TC 1.A.1.10) family. Nav1.7/SCN9A subfamily. The Nav1.7 voltage-gated sodium channel consists of an ion-conducting alpha subunit SCN9A which is functional on its own regulated by one or more beta-1 (SCN1B), beta-2 (SCN2B), beta-3 (SCN3B) and beta-4 (SCN4B) subunits. SCN1B and SCN3B are non-covalently associated with SCN9A. SCN2B and SCN4B are disulfide-linked to SCN9A. SCN1B regulates channel inactivation. Interacts with NEDD4 and NEDD4L; regulates Nav1.7 activity most probably through ubiquitination and subsequent endocytosis. Interacts with TMEM233; modulates the gating properties of NaV1.7. In terms of processing, phosphorylation at Ser-1487 by PKC in a highly conserved cytoplasmic loop increases peak sodium currents. Ubiquitinated by NEDD4L; which may promote its endocytosis. Expressed in the sciatic nerve, spinal cord, brainstem, cerebellum and cortex, but not expressed in the lung, skeletal and cardiac muscles, kidney and liver.

It is found in the cell membrane. The protein resides in the cell projection. The protein localises to the neuron projection. Its subcellular location is the axon. It catalyses the reaction Na(+)(in) = Na(+)(out). Pore-forming subunit of Nav1.7, a voltage-gated sodium (Nav) channel that directly mediates the depolarizing phase of action potentials in excitable membranes. Navs, also called VGSCs (voltage-gated sodium channels) or VDSCs (voltage-dependent sodium channels), operate by switching between closed and open conformations depending on the voltage difference across the membrane. In the open conformation they allow Na(+) ions to selectively pass through the pore, along their electrochemical gradient. The influx of Na(+) ions provokes membrane depolarization, initiating the propagation of electrical signals throughout cells and tissues. Nav1.7 plays a crucial role in controlling the excitability and action potential propagation from nociceptor neurons, thereby contributing to the sensory perception of pain. In Oryctolagus cuniculus (Rabbit), this protein is Sodium channel protein type 9 subunit alpha.